A 243-amino-acid chain; its full sequence is Juxtaposed with another zinc finger protein 1 (243 aa).

A C2H2-type 1 zinc finger spans residues 12–37 (NTCRFGGCGLHFPTLADLIEHIEDNH). Residues 39 to 79 (DTDPRVLEKQELQQPTYVALSYINRFMTDAARREQESLKKK) form a required for interaction with NR2C2 region. Residues 89–108 (SSSVSRGNVSTPPRHSSGSL) show a composition bias toward polar residues. A disordered region spans residues 89 to 151 (SSSVSRGNVS…SDSDESWTTE (63 aa)). A phosphothreonine mark is found at Thr109 and Thr113. The segment covering 118–130 (PSSSFRSSTPTGS) has biased composition (low complexity). Positions 131-148 (EYDEEEVDYEESDSDESW) are enriched in acidic residues. The C2H2-type 2 zinc-finger motif lies at 173-198 (FACPVPGCKKRYKNVNGIKYHAKNGH). The C2H2-type 3; degenerate zinc finger occupies 208–230 (FKCRCGKSYKTAQGLRHHTINFH).

As to quaternary structure, interacts with NR2C2 (via ligand-binding region). As to expression, highest expression in testis with moderate levels in colon, placenta, prostate and ovary and low levels in brain, spleen, liver and small intestine.

The protein localises to the nucleus. Its function is as follows. Acts as a transcriptional corepressor of orphan nuclear receptor NR2C2. Inhibits expression of the gluconeogenesis enzyme PCK2 through inhibition of NR2C2 activity. Also involved in transcriptional activation of NAMPT by promoting expression of PPARA and PPARD. Plays a role in lipid metabolism by suppressing lipogenesis, increasing lipolysis and decreasing lipid accumulation in adipose tissue. Plays a role in glucose homeostasis by improving glucose metabolism and insulin sensitivity. The sequence is that of Juxtaposed with another zinc finger protein 1 from Homo sapiens (Human).